Here is a 186-residue protein sequence, read N- to C-terminus: MKTAQELRAGNVFMVGNDPMVVQKTEYIKGGRSSAKVSMKLKNLLTGAASETIYKADDKFDVVILSRKNCTYSYFADPMYVFMDEEFNQYEIEADNIGDALKFIVDGMEDQCEVTFYEGNPISVELPTIIVREVEYTEPAVKGDTSGKVMKTARLVGGTEIQVMSYIENGDKIEIDTRTGEFRKRA.

It belongs to the elongation factor P family.

The protein resides in the cytoplasm. Its pathway is protein biosynthesis; polypeptide chain elongation. Functionally, involved in peptide bond synthesis. Stimulates efficient translation and peptide-bond synthesis on native or reconstituted 70S ribosomes in vitro. Probably functions indirectly by altering the affinity of the ribosome for aminoacyl-tRNA, thus increasing their reactivity as acceptors for peptidyl transferase. The protein is Elongation factor P of Neisseria meningitidis serogroup A / serotype 4A (strain DSM 15465 / Z2491).